The primary structure comprises 158 residues: MSSAIERKSLDPSEEPVDEVLQMPPSLLTCGGCQQNIGDRYFLKAIDQYWHEDCLSCDLCGCRLGEVGRRLYYKLGRKLCRRDYLRLFGQDGLCASCDKRIRAYEMTMRVKDKVYHLECFKCAACQKHFCVGDRYLLINSDIVCEQDIYEWTKINGMI.

2 LIM zinc-binding domains span residues 30-89 (CGGC…RLFG) and 94-153 (CASC…EWTK).

In terms of assembly, interacts via its LIM domains with ELF2 and LDB1. Interacts with BEX2 and KDM5A. Also interacts with basic helix-loop-helix protein TAL1/SCL and can assemble in a complex with LMO2 and TAL1/SCL.

It localises to the nucleus. In terms of biological role, acts with TAL1/SCL to regulate red blood cell development. Also acts with LDB1 to maintain erythroid precursors in an immature state. This chain is Rhombotin-2 (LMO2), found in Bos taurus (Bovine).